A 169-amino-acid polypeptide reads, in one-letter code: Protein-export protein SecB (169 aa).

It belongs to the SecB family. Homotetramer, a dimer of dimers. One homotetramer interacts with 1 SecA dimer.

It localises to the cytoplasm. In terms of biological role, one of the proteins required for the normal export of preproteins out of the cell cytoplasm. It is a molecular chaperone that binds to a subset of precursor proteins, maintaining them in a translocation-competent state. It also specifically binds to its receptor SecA. The protein is Protein-export protein SecB of Haemophilus influenzae (strain 86-028NP).